The chain runs to 619 residues: DEAD-box ATP-dependent RNA helicase 35B (619 aa).

Low complexity-rich tracts occupy residues 1-10 (MAAAAAAAAA) and 49-58 (PPTTNAVAVA). The disordered stretch occupies residues 1 to 72 (MAAAAAAAAA…PPRSTSSPAV (72 aa)). Positions 173–201 (RSFGDLRLPEPILRALRGKGIEKPTPIQV) match the Q motif motif. Residues 204–388 (LPVALSGRDM…KSALVKPIIV (185 aa)) form the Helicase ATP-binding domain. An ATP-binding site is contributed by 217–224 (AFTGSGKT). Residues 336–339 (DEAD) carry the DEAD box motif. The Helicase C-terminal domain maps to 399–559 (DVIQEVEYVK…RLPPILADLD (161 aa)). The CCHC-type zinc-finger motif lies at 576–593 (KGCAFCGGLGHRIEACPK).

This sequence belongs to the DEAD box helicase family. DDX41 subfamily.

The enzyme catalyses ATP + H2O = ADP + phosphate + H(+). The chain is DEAD-box ATP-dependent RNA helicase 35B from Oryza sativa subsp. japonica (Rice).